The sequence spans 206 residues: Protein GrpE (206 aa).

Residues 1 to 64 (MSKKASMHKE…KALEEAQQQA (64 aa)) form a disordered region. The segment covering 46–58 (SDAKVQELEKALE) has biased composition (basic and acidic residues).

The protein belongs to the GrpE family. Homodimer.

The protein resides in the cytoplasm. Participates actively in the response to hyperosmotic and heat shock by preventing the aggregation of stress-denatured proteins, in association with DnaK and GrpE. It is the nucleotide exchange factor for DnaK and may function as a thermosensor. Unfolded proteins bind initially to DnaJ; upon interaction with the DnaJ-bound protein, DnaK hydrolyzes its bound ATP, resulting in the formation of a stable complex. GrpE releases ADP from DnaK; ATP binding to DnaK triggers the release of the substrate protein, thus completing the reaction cycle. Several rounds of ATP-dependent interactions between DnaJ, DnaK and GrpE are required for fully efficient folding. This Prosthecochloris aestuarii (strain DSM 271 / SK 413) protein is Protein GrpE.